Reading from the N-terminus, the 553-residue chain is RNA exonuclease 1 (553 aa).

Phosphoserine is present on S24. Residues 167–194 (MEKINKLKELQKKKKITINDLVLSEQQL) adopt a coiled-coil conformation. The Exonuclease domain occupies 225-373 (IFALDCEMCL…EDARACLELT (149 aa)). A coiled-coil region spans residues 509-533 (WNNLSTELEFIQDKKERLDKRRERE).

It belongs to the REXO1/REXO3 family.

The protein resides in the nucleus. In terms of biological role, 3' exoribonuclease required for 5S rRNA maturation and for the proper maturation of the 5' cistron of the tRNA-Arg3 dicistronic gene. Involved with REX2 in the maturation of the 5.8S rRNA, and with REX2 and REX3, in the 3' processing of the U5L snRNA. This is RNA exonuclease 1 (RNH70) from Saccharomyces cerevisiae (strain ATCC 204508 / S288c) (Baker's yeast).